A 523-amino-acid polypeptide reads, in one-letter code: Cytoplasmic dynein 1 light intermediate chain 1 (523 aa).

Residues Met-1–Gly-45 are disordered. Residue Gly-74–Thr-81 coordinates ATP. Ser-207 bears the Phosphoserine mark. Position 213 is a phosphothreonine (Thr-213). Disordered regions lie at residues Pro-387 to Met-434 and Gly-457 to Ser-523. 2 positions are modified to phosphoserine: Ser-398 and Ser-405. Thr-408 is modified (phosphothreonine). 4 positions are modified to phosphoserine: Ser-412, Ser-419, Ser-421, and Ser-427. Low complexity predominate over residues Ser-412–Ser-421. A compositionally biased stretch (gly residues) spans Ser-458–Ala-473. Low complexity predominate over residues Gly-474–Ala-483. 2 positions are modified to phosphoserine: Ser-486 and Ser-510. 2 positions are modified to phosphothreonine: Thr-512 and Thr-513. A Phosphoserine modification is found at Ser-516.

It belongs to the dynein light intermediate chain family. As to quaternary structure, homodimer. The cytoplasmic dynein 1 complex consists of two catalytic heavy chains (HCs) and a number of non-catalytic subunits presented by intermediate chains (ICs), light intermediate chains (LICs) and light chains (LCs); the composition seems to vary in respect to the IC, LIC and LC composition. The heavy chain homodimer serves as a scaffold for the probable homodimeric assembly of the respective non-catalytic subunits. The ICs and LICs bind directly to the HC dimer and the LCs assemble on the IC dimer. Self-associates. Interacts with DYNC1H1; DYNC1LI1 and DYNC1LI2 bind mutually exclusive to DYNC1H1. Interacts with PCNT. Forms a complex with RAB11FIP3 and RAB11A1; the interaction between DYNC1LI1 and RAB11FIP3 is direct and induces DYNC1LI1 localization onto endosomal membrane; the complex regulates endocytic trafficking. Interacts with RUFY3. In terms of processing, phosphorylated during mitosis but not in interphase.

The protein localises to the cytoplasm. It is found in the chromosome. It localises to the centromere. Its subcellular location is the kinetochore. The protein resides in the cytoskeleton. The protein localises to the spindle pole. It is found in the recycling endosome membrane. In terms of biological role, acts as one of several non-catalytic accessory components of the cytoplasmic dynein 1 complex that are thought to be involved in linking dynein to cargos and to adapter proteins that regulate dynein function. Cytoplasmic dynein 1 acts as a motor for the intracellular retrograde motility of vesicles and organelles along microtubules. May play a role in binding dynein to membranous organelles or chromosomes. Probably involved in the microtubule-dependent transport of pericentrin. Is required for progress through the spindle assembly checkpoint. The phosphorylated form appears to be involved in the selective removal of MAD1L1 and MAD1L2 but not BUB1B from kinetochores. Forms a functional Rab11/RAB11FIP3/dynein complex onto endosomal membrane that regulates the movement of peripheral sorting endosomes (SE) along microtubule tracks toward the microtubule organizing center/centrosome, generating the endosomal recycling compartment (ERC). The polypeptide is Cytoplasmic dynein 1 light intermediate chain 1 (Dync1li1) (Rattus norvegicus (Rat)).